The sequence spans 278 residues: S-formylglutathione hydrolase YeiG (278 aa).

Catalysis depends on charge relay system residues S145, D223, and H256.

This sequence belongs to the esterase D family.

It carries out the reaction S-formylglutathione + H2O = formate + glutathione + H(+). Its function is as follows. Serine hydrolase involved in the detoxification of formaldehyde. Hydrolyzes S-formylglutathione to glutathione and formate. The chain is S-formylglutathione hydrolase YeiG (yeiG) from Escherichia coli O6:K15:H31 (strain 536 / UPEC).